The chain runs to 219 residues: Guanylate kinase (219 aa).

The Guanylate kinase-like domain maps to 15-194 (GLMFVLSSPS…AFESVKAILR (180 aa)). 22 to 29 (SPSGAGKT) contacts ATP.

It belongs to the guanylate kinase family.

The protein resides in the cytoplasm. It catalyses the reaction GMP + ATP = GDP + ADP. In terms of biological role, essential for recycling GMP and indirectly, cGMP. The sequence is that of Guanylate kinase from Rhodopseudomonas palustris (strain BisB5).